The sequence spans 138 residues: Small ribosomal subunit protein uS12 (138 aa).

Residue Asp89 is modified to 3-methylthioaspartic acid. A disordered region spans residues 101 to 138 (ALDTAGTQNRNQGRSKYGTKRPKKGAATAAKGPVKGKK). Polar residues predominate over residues 105–114 (AGTQNRNQGR). Residues 125 to 138 (GAATAAKGPVKGKK) are compositionally biased toward low complexity.

The protein belongs to the universal ribosomal protein uS12 family. In terms of assembly, part of the 30S ribosomal subunit. Contacts proteins S8 and S17. May interact with IF1 in the 30S initiation complex.

Functionally, with S4 and S5 plays an important role in translational accuracy. Interacts with and stabilizes bases of the 16S rRNA that are involved in tRNA selection in the A site and with the mRNA backbone. Located at the interface of the 30S and 50S subunits, it traverses the body of the 30S subunit contacting proteins on the other side and probably holding the rRNA structure together. The combined cluster of proteins S8, S12 and S17 appears to hold together the shoulder and platform of the 30S subunit. In Heliobacterium modesticaldum (strain ATCC 51547 / Ice1), this protein is Small ribosomal subunit protein uS12.